The sequence spans 394 residues: Flap endonuclease 1 (394 aa).

The segment at 1-104 is N-domain; sequence MGIKQLFSVI…GELAKRFQRK (104 aa). D34 is a Mg(2+) binding site. R47 and R70 together coordinate DNA. Mg(2+) contacts are provided by D86, E158, E160, D179, and D181. The segment at 122-253 is I-domain; sequence DVEKFSRRTV…STALKLIREH (132 aa). E158 is a DNA binding site. G231 and D233 together coordinate DNA. D233 contributes to the Mg(2+) binding site. The interval 341-349 is interaction with PCNA; that stretch reads QQARIEGFF. Positions 356–383 are enriched in basic and acidic residues; the sequence is EEEKKAHKRKLEEQAEQKRKKVKEEKKE. The disordered stretch occupies residues 356–394; that stretch reads EEEKKAHKRKLEEQAEQKRKKVKEEKKEKAKLKAKPRGA. Over residues 384–394 the composition is skewed to basic residues; it reads KAKLKAKPRGA.

It belongs to the XPG/RAD2 endonuclease family. FEN1 subfamily. In terms of assembly, interacts with PCNA. Three molecules of dnr-8/fen1 bind to one PCNA trimer with each molecule binding to one PCNA monomer. PCNA stimulates the nuclease activity without altering cleavage specificity. It depends on Mg(2+) as a cofactor. Phosphorylated. Phosphorylation upon DNA damage induces relocalization to the nuclear plasma.

It is found in the nucleus. Its subcellular location is the nucleolus. It localises to the nucleoplasm. The protein localises to the mitochondrion. Functionally, structure-specific nuclease with 5'-flap endonuclease and 5'-3' exonuclease activities involved in DNA replication and repair. During DNA replication, cleaves the 5'-overhanging flap structure that is generated by displacement synthesis when DNA polymerase encounters the 5'-end of a downstream Okazaki fragment. It enters the flap from the 5'-end and then tracks to cleave the flap base, leaving a nick for ligation. Also involved in the long patch base excision repair (LP-BER) pathway, by cleaving within the apurinic/apyrimidinic (AP) site-terminated flap. Acts as a genome stabilization factor that prevents flaps from equilibrating into structures that lead to duplications and deletions. Also possesses 5'-3' exonuclease activity on nicked or gapped double-stranded DNA, and exhibits RNase H activity. Also involved in replication and repair of rDNA and in repairing mitochondrial DNA. The sequence is that of Flap endonuclease 1 (dnr-8) from Neurospora crassa (strain ATCC 24698 / 74-OR23-1A / CBS 708.71 / DSM 1257 / FGSC 987).